We begin with the raw amino-acid sequence, 338 residues long: 4-hydroxy-2-oxovalerate aldolase (338 aa).

Residues 4-254 (PRLTDTTLRD…NPGLDVLALM (251 aa)) form the Pyruvate carboxyltransferase domain. A substrate-binding site is contributed by 12 to 13 (RD). Asp13 is a Mn(2+) binding site. His16 (proton acceptor) is an active-site residue. Residues Ser166 and His193 each coordinate substrate. Residues His193 and His195 each contribute to the Mn(2+) site. Tyr284 is a substrate binding site.

The protein belongs to the 4-hydroxy-2-oxovalerate aldolase family.

The enzyme catalyses (S)-4-hydroxy-2-oxopentanoate = acetaldehyde + pyruvate. The chain is 4-hydroxy-2-oxovalerate aldolase from Roseiflexus sp. (strain RS-1).